The sequence spans 281 residues: Transcription factor lfc1 (281 aa).

A DNA-binding region (zn(2)-C6 fungal-type) is located at residues 60–87; sequence CLTCRMKKIKCDETKPTCARCTHGQREC.

It localises to the nucleus. In terms of biological role, transcription factor that acts as a negative regulator of basidioma development via repressing the expression of genes involved in basidioma development, including hydrophobins such as Hyd-1 and Hyd-8, lectins such as JRL1, as well as the fruiting body differentiation gene FVFD16. This Flammulina velutipes (Agaricus velutipes) protein is Transcription factor lfc1.